The chain runs to 426 residues: Probable imidazolonepropionase (426 aa).

4-imidazolone-5-propanoate contacts are provided by Tyr-159 and His-192. Residue Tyr-159 participates in N-formimidoyl-L-glutamate binding. Position 260 (His-260) interacts with Fe(3+). His-260 lines the Zn(2+) pocket. 4-imidazolone-5-propanoate is bound at residue Glu-263. Asp-334 provides a ligand contact to Fe(3+). Asp-334 contacts Zn(2+). Asn-336 is a binding site for N-formimidoyl-L-glutamate.

This sequence belongs to the metallo-dependent hydrolases superfamily. HutI family. Zn(2+) is required as a cofactor. Fe(3+) serves as cofactor.

It carries out the reaction 4-imidazolone-5-propanoate + H2O = N-formimidoyl-L-glutamate. It participates in amino-acid degradation; L-histidine degradation into L-glutamate; N-formimidoyl-L-glutamate from L-histidine: step 3/3. The polypeptide is Probable imidazolonepropionase (AMDHD1) (Homo sapiens (Human)).